Here is a 588-residue protein sequence, read N- to C-terminus: Vesicular glutamate transporter 3 (588 aa).

The Cytoplasmic portion of the chain corresponds to 1 to 76; that stretch reads MPFNAFDTFK…CSCCGIPKRY (76 aa). The chain crosses the membrane as a helical span at residues 77 to 97; that stretch reads IIAVMSGLGFCISFGIRCNLG. The Vesicular segment spans residues 98–130; it reads VAIVEMVNNSTVYVDGKPEIQTAQFNWDPETVG. Asn106 is a glycosylation site (N-linked (GlcNAc...) asparagine). A helical transmembrane segment spans residues 131-151; that stretch reads LIHGSFFWGYIVTQIPGGFIS. The Cytoplasmic segment spans residues 152 to 153; sequence NK. The helical transmembrane segment at 154–174 threads the bilayer; it reads FAANRVFGAAIFLTSTLNMFI. The Vesicular segment spans residues 175–182; the sequence is PSAARVHY. Residues 183–203 form a helical membrane-spanning segment; sequence GCVMCVRILQGLVEGVTYPAC. The Cytoplasmic portion of the chain corresponds to 204 to 221; sequence HGMWSKWAPPLERSRLAT. Residues 222 to 242 traverse the membrane as a helical segment; that stretch reads TSFCGSYAGAVVAMPLAGVLV. The Vesicular portion of the chain corresponds to 243 to 249; that stretch reads QYIGWAS. Residues 250–270 form a helical membrane-spanning segment; the sequence is VFYIYGMFGIIWYMFWLLQAY. Over 271–314 the chain is Cytoplasmic; that stretch reads ECPAVHPTISNEERTYIETSIGEGANLASLSKFNTPWRRFFTSL. A helical transmembrane segment spans residues 315–335; the sequence is PVYAIIVANFCRSWTFYLLLI. Residues 336–353 are Vesicular-facing; it reads SQPAYFEEVFGFAISKVG. A helical membrane pass occupies residues 354–374; it reads LLSAVPHMVMTIVVPIGGQLA. Topologically, residues 375 to 390 are cytoplasmic; sequence DYLRSRKILTTTAVRK. The helical transmembrane segment at 391 to 411 threads the bilayer; it reads IMNCGGFGMEATLLLVVGFSH. The Vesicular segment spans residues 412–413; that stretch reads TK. A helical transmembrane segment spans residues 414 to 434; that stretch reads GVAISFLVLAVGFSGFAISGF. The Cytoplasmic portion of the chain corresponds to 435-447; it reads NVNHLDIAPRYAS. The chain crosses the membrane as a helical span at residues 448–468; the sequence is ILMGISNGVGTLSGMVCPLIV. Residues 469 to 481 lie on the Vesicular side of the membrane; that stretch reads GAMTKHKTREEWQ. Residues 482–502 traverse the membrane as a helical segment; it reads NVFLIAALVHYSGVIFYGVFA. The Cytoplasmic portion of the chain corresponds to 503–585; the sequence is SGEKQDWADP…LSYQNEEDFS (83 aa). The interval 539-588 is disordered; that stretch reads FVSPRKKMSYGATTQNCEVQKTDRRQQRESAFEGEEPLSYQNEEDFSETS. The segment covering 558–569 has biased composition (basic and acidic residues); the sequence is QKTDRRQQRESA. Residues 570–588 are compositionally biased toward acidic residues; that stretch reads FEGEEPLSYQNEEDFSETS.

Belongs to the major facilitator superfamily. Sodium/anion cotransporter family. VGLUT subfamily. As to expression, expressed in brain, kidney and liver. Expressed within the amygdala, brainstem, cerberal cortex, dorsal root ganglia, dorsal spinal cord, hippocampus, hypothalamus, retina, striatum and ventral spinal cord. Expressed within neurons of the caudate-putamen, olfactory tubercle, nucleus accumbens, hippocampus, interpeduncular nucleus and dorsal and medial raphe nuclei. Expressed in inner hair cells of the ear. Expressed at synaptic terminals within the lateral superior olive (LSO), a nucleus of the mammalian sound localization system, and in the medial nucleus of the trapezoid body (MNTB), which provides inhibitory input to the LSO.

It localises to the cytoplasmic vesicle. The protein localises to the secretory vesicle. Its subcellular location is the synaptic vesicle membrane. It is found in the cell membrane. The protein resides in the synapse. It localises to the synaptosome. It carries out the reaction L-glutamate(out) = L-glutamate(in). The enzyme catalyses chloride(in) = chloride(out). The catalysed reaction is 3 Na(+)(out) + phosphate(out) = 3 Na(+)(in) + phosphate(in). With respect to regulation, the L-glutamate uniporter activity exhibits a biphasic dependence on chloride concentration. Chloride channel activity is allosterically activated by lumenal H(+) and Cl(-) leading to synaptic vesicles acidification. The glutamate transport activity is allosterically activated by lumenal H(+) and Cl(-), preventing non-vesicular L-glutamate release. Functionally, multifunctional transporter that transports L-glutamate as well as multiple ions such as chloride, sodium and phosphate. At the synaptic vesicle membrane, mainly functions as an uniporter that mediates the uptake of L-glutamate into synaptic vesicles at presynaptic nerve terminals of excitatory neural cells. The L-glutamate uniporter activity is electrogenic and is driven by the proton electrochemical gradient, mainly by the electrical gradient established by the vacuolar H(+)-ATPase across the synaptic vesicle membrane. In addition, functions as a chloride channel that allows a chloride permeation through the synaptic vesicle membrane that affects the proton electrochemical gradient and promotes synaptic vesicles acidification. At the plasma membrane, following exocytosis, functions as a symporter of Na(+) and phosphate from the extracellular space to the cytoplasm allowing synaptic phosphate homeostasis regulation. The symporter activity is electrogenic. Moreover, operates synergistically with SLC18A3/VACHT under a constant H(+) gradient, thereby allowing striatal vesicular acetylcholine uptake. The polypeptide is Vesicular glutamate transporter 3 (Rattus norvegicus (Rat)).